The sequence spans 178 residues: MKAYFYDNLPGDQRLPHDSGKEVTVAELEKVGVLYFRFPDVEGVNTLAAERGYKNRDEIIVSPEKMGAIYETKVRQFFDEHLHEDEEIRYIRDGAGYFDVRNEGDEWIRIKLVKDDLIILPAGIYHRFTTDDTNYIQAMRLFKEEPKWTPLNRTEGLDENPYRQEYVTQFLKAQAEQA.

The Fe(2+) site is built by His81, His83, Glu87, and His126. Ni(2+) contacts are provided by His81, His83, Glu87, and His126.

This sequence belongs to the acireductone dioxygenase (ARD) family. Fe(2+) is required as a cofactor. The cofactor is Ni(2+).

The protein localises to the cytoplasm. It localises to the nucleus. The catalysed reaction is 1,2-dihydroxy-5-(methylsulfanyl)pent-1-en-3-one + O2 = 4-methylsulfanyl-2-oxobutanoate + formate + 2 H(+). The enzyme catalyses 1,2-dihydroxy-5-(methylsulfanyl)pent-1-en-3-one + O2 = 3-(methylsulfanyl)propanoate + CO + formate + 2 H(+). Its pathway is amino-acid biosynthesis; L-methionine biosynthesis via salvage pathway; L-methionine from S-methyl-5-thio-alpha-D-ribose 1-phosphate: step 5/6. Functionally, catalyzes 2 different reactions between oxygen and the acireductone 1,2-dihydroxy-3-keto-5-methylthiopentene (DHK-MTPene) depending upon the metal bound in the active site. Fe-containing acireductone dioxygenase (Fe-ARD) produces formate and 2-keto-4-methylthiobutyrate (KMTB), the alpha-ketoacid precursor of methionine in the methionine recycle pathway. Ni-containing acireductone dioxygenase (Ni-ARD) produces methylthiopropionate, carbon monoxide and formate, and does not lie on the methionine recycle pathway. The polypeptide is Acireductone dioxygenase (adi1) (Neurospora crassa (strain ATCC 24698 / 74-OR23-1A / CBS 708.71 / DSM 1257 / FGSC 987)).